A 626-amino-acid chain; its full sequence is Chaperone protein HtpG (626 aa).

An a; substrate-binding region spans residues 1-339; that stretch reads MSTNQETRGF…SNDLPLNVSR (339 aa). Positions 340-555 are b; that stretch reads EILQDNKVTA…NDQMTTQMAK (216 aa). The tract at residues 556–626 is c; sequence LFAAAGQPVP…FIKRINKLLG (71 aa).

The protein belongs to the heat shock protein 90 family. Homodimer.

The protein localises to the cytoplasm. In terms of biological role, molecular chaperone. Has ATPase activity. This chain is Chaperone protein HtpG, found in Aggregatibacter actinomycetemcomitans (Actinobacillus actinomycetemcomitans).